The chain runs to 117 residues: Ribosome-binding factor A (117 aa).

Belongs to the RbfA family. Monomer. Binds 30S ribosomal subunits, but not 50S ribosomal subunits or 70S ribosomes.

It is found in the cytoplasm. Its function is as follows. One of several proteins that assist in the late maturation steps of the functional core of the 30S ribosomal subunit. Associates with free 30S ribosomal subunits (but not with 30S subunits that are part of 70S ribosomes or polysomes). Required for efficient processing of 16S rRNA. May interact with the 5'-terminal helix region of 16S rRNA. This chain is Ribosome-binding factor A, found in Anaplasma marginale (strain St. Maries).